The sequence spans 635 residues: Chaperone protein DnaK (635 aa).

Thr-198 bears the Phosphothreonine; by autocatalysis mark. The segment at 606–635 is disordered; sequence QATAASPGAEAPKADDDVVDAEFSEVDENK. A compositionally biased stretch (acidic residues) spans 622 to 635; it reads DVVDAEFSEVDENK.

It belongs to the heat shock protein 70 family.

Acts as a chaperone. This chain is Chaperone protein DnaK, found in Novosphingobium aromaticivorans (strain ATCC 700278 / DSM 12444 / CCUG 56034 / CIP 105152 / NBRC 16084 / F199).